A 481-amino-acid polypeptide reads, in one-letter code: Protein hedgehog (481 aa).

The N-palmitoyl cysteine moiety is linked to residue Cys93. Ca(2+) contacts are provided by Glu157, Glu158, Asp163, Thr193, Glu194, Asp197, and Asp199. Gly265 is lipidated: Cholesterol glycine ester.

The protein belongs to the hedgehog family. As to quaternary structure, interacts with shf. In terms of processing, the C-terminal part of the hedgehog protein precursor displays an autoproteolysis activity that results in the cleavage of the full-length protein into two parts (N-product and C-product). In addition, the C-terminal part displays a cholesterol transferase activity that results by the covalent attachment of a cholesterol moiety to the C-terminal of the newly generated N-product. The N-product is the active species in both local and long-range signaling, whereas the C-product has no signaling activity. Cholesterylation is required for N-product targeting to lipid rafts and multimerization. Post-translationally, N-palmitoylation by Rasp of the hedgehog N-product, within the secretory pathway, is required for the embryonic and larval patterning activities of the hedgehog signal.

It localises to the nucleus. The protein resides in the cytoplasm. It is found in the cell membrane. It carries out the reaction glycyl-L-cysteinyl-[protein] + cholesterol + H(+) = [protein]-C-terminal glycyl cholesterol ester + N-terminal L-cysteinyl-[protein]. Functionally, the C-terminal part of the hedgehog protein precursor displays an autoproteolysis activity that results in the cleavage of the full-length protein into two parts (N-product and C-product). In addition, the C-terminal part displays a cholesterol transferase activity that results by the covalent attachment of a cholesterol moiety to the C-terminal of the newly generated N-product. Once cleaved, the C-product has no signaling activity and diffuses from the cell. In terms of biological role, the dually lipidated hedgehog protein N-product is a morphogen which is essential for a variety of patterning events during development. Establishes the anterior-posterior axis of the embryonic segments and patterns the larval imaginal disks. Binds to the patched (ptc) receptor, which functions in association with smoothened (smo), to activate the transcription of target genes wingless (wg), decapentaplegic (dpp) and ptc. In the absence of hh, ptc represses the constitutive signaling activity of smo through fused (fu). Essential component of a signaling pathway which regulates the Duox-dependent gut immune response to bacterial uracil; required to activate Cad99C-dependent endosome formation, norpA-dependent Ca2+ mobilization and p38 MAPK, which are essential steps in the Duox-dependent production of reactive oxygen species (ROS) in response to intestinal bacterial infection. During photoreceptor differentiation, it up-regulates transcription of Ubr3, which in turn promotes the hh-signaling pathway by mediating the ubiquitination and degradation of cos. The protein is Protein hedgehog of Drosophila persimilis (Fruit fly).